We begin with the raw amino-acid sequence, 479 residues long: Probable periplasmic serine endoprotease DegP-like (479 aa).

A signal peptide spans 1–27 (MSIPRLKSYLSMFAAVLMLGQVLSAQA). Active-site charge relay system residues include His-117, Asp-147, and Ser-220. Substrate-binding positions include 218-220 (GNS) and 275-279 (LGVVI). PDZ domains lie at 264–355 (LKKD…IRNG) and 361–468 (DVTI…LRQG). The disordered stretch occupies residues 368–395 (PDDDADIGTGTGADGSAERSSNRLGVSV).

This sequence belongs to the peptidase S1C family.

The protein localises to the periplasm. It carries out the reaction Acts on substrates that are at least partially unfolded. The cleavage site P1 residue is normally between a pair of hydrophobic residues, such as Val-|-Val.. Its function is as follows. Might be efficient in the degradation of transiently denatured and unfolded proteins which accumulate in the periplasm following stress conditions. The protein is Probable periplasmic serine endoprotease DegP-like of Pseudomonas putida (strain W619).